A 597-amino-acid polypeptide reads, in one-letter code: FERM domain-containing protein 3 (597 aa).

Residues 32-312 (MRCTIRLLDD…ENQAFYKYAK (281 aa)) form the FERM domain. The interval 409–435 (SAPLISSSPVKAAQEYEDPPSEEEDKI) is disordered. Acidic residues predominate over residues 423–432 (EYEDPPSEEE). Residues 531–551 (LLVVGLGLLLFVFPLLLLLLE) form a helical membrane-spanning segment.

It localises to the membrane. Functionally, putative tumor suppressor gene that may be implicated in the origin and progression of lung cancer. The polypeptide is FERM domain-containing protein 3 (FRMD3) (Pongo abelii (Sumatran orangutan)).